The following is a 505-amino-acid chain: 2-isopropylmalate synthase (505 aa).

Residues 5–267 enclose the Pyruvate carboxyltransferase domain; that stretch reads VYIFDTTLRD…YTNIKTEEIY (263 aa). Residues Asp-14, His-202, His-204, and Asn-238 each contribute to the Mn(2+) site. Residues 391–505 are regulatory domain; the sequence is TLEYLHISSG…VNKLIWDSQK (115 aa).

This sequence belongs to the alpha-IPM synthase/homocitrate synthase family. LeuA type 1 subfamily. In terms of assembly, homodimer. Requires Mn(2+) as cofactor.

Its subcellular location is the cytoplasm. It carries out the reaction 3-methyl-2-oxobutanoate + acetyl-CoA + H2O = (2S)-2-isopropylmalate + CoA + H(+). It participates in amino-acid biosynthesis; L-leucine biosynthesis; L-leucine from 3-methyl-2-oxobutanoate: step 1/4. Catalyzes the condensation of the acetyl group of acetyl-CoA with 3-methyl-2-oxobutanoate (2-ketoisovalerate) to form 3-carboxy-3-hydroxy-4-methylpentanoate (2-isopropylmalate). The protein is 2-isopropylmalate synthase of Pelotomaculum thermopropionicum (strain DSM 13744 / JCM 10971 / SI).